The sequence spans 121 residues: Nitrogenase-stabilizing/protective protein NifW (121 aa).

It belongs to the NifW family. Homotrimer; associates with NifD.

In terms of biological role, may protect the nitrogenase Fe-Mo protein from oxidative damage. The polypeptide is Nitrogenase-stabilizing/protective protein NifW (Leptothrix cholodnii (strain ATCC 51168 / LMG 8142 / SP-6) (Leptothrix discophora (strain SP-6))).